The primary structure comprises 245 residues: Terpene cyclase esdpB (245 aa).

Helical transmembrane passes span 19-39, 48-68, 75-95, 112-132, 140-160, 177-197, and 208-228; these read MVASIFLISGTGWIVNYVTTI, SGVTLLSLCNNLAWETVFAVI, IAALVITVWLLVNIYVIYVSV, LPVVTLLGFVGFLTGHIALSM, LYWGGMICQVTLSASALGLLI, FIASSFGVPGLFVRAVYWPSA, and WLSGVFFLLDLSYGAIYYHIS.

The protein belongs to the paxB family.

Its subcellular location is the membrane. It participates in secondary metabolite biosynthesis; terpenoid biosynthesis. Functionally, terpene cyclase; part of the cluster that mediates the biosynthesis of shearones, diterpenoid pyrones (DPs) which are structurally diverse meroterpenoids consisting of a diterpene linked by a pyrone, and which may exhibit a range of bioactivities. Within the pathway, esdpB takes part to the biosynthesis of the molecular scaffold by catalyzing the cyclization of the prenyl group initiated by protonation and ring-opening of the epoxide to produce the diterpenoid pyrone scaffold. The molecular scaffold is commonly biosynthesized by a series of enzymes including the non-reducing polyketide synthase (NR-PKS) esdpA that generates an alpha-pyrone; the prenyltransferase esdpC that attaches a geranylgeranyl pyrophosphate (GGPP) produced by the GGPP synthase (GGPPS) esdpD onto the pyrone unit; the FAD-dependent monooxygenase esdpE that converts an olefin on the diterpene unit into an epoxide; and the terpene cyclase esdpB that catalyzes the cyclization reactions to give the molecular backbone shearone A. In the modification steps, esdpF oxidizes the hydroxy group to a ketone at C-3 and esdpG then attaches hydroxy groups at both C-11 and C-12. After that, esdpI hydroxylates at C-20 and esdpH hydroxylates at C-6'. The ether bridge is generated by nucleophilic attack of the hydroxy group at C-20 to the carbonyl carbon at C-3. EsdpH can also functions prior to esdpI. The different combinations of these modification enzymes lead to the production of diverse shearone derivatives, shearone I being the end product of the pathway. The alpha-ketoglutarate-dependent dioxygenase esdpJ seems not to be involved in this pathway. In Penicillium shearii (Eupenicillium shearii), this protein is Terpene cyclase esdpB.